We begin with the raw amino-acid sequence, 320 residues long: Acetyl-coenzyme A carboxylase carboxyl transferase subunit alpha (320 aa).

A CoA carboxyltransferase C-terminal domain is found at 42-295 (IGDKAAQALK…GDAIAEAFND (254 aa)).

The protein belongs to the AccA family. As to quaternary structure, acetyl-CoA carboxylase is a heterohexamer composed of biotin carboxyl carrier protein (AccB), biotin carboxylase (AccC) and two subunits each of ACCase subunit alpha (AccA) and ACCase subunit beta (AccD).

The protein localises to the cytoplasm. It catalyses the reaction N(6)-carboxybiotinyl-L-lysyl-[protein] + acetyl-CoA = N(6)-biotinyl-L-lysyl-[protein] + malonyl-CoA. The protein operates within lipid metabolism; malonyl-CoA biosynthesis; malonyl-CoA from acetyl-CoA: step 1/1. Its function is as follows. Component of the acetyl coenzyme A carboxylase (ACC) complex. First, biotin carboxylase catalyzes the carboxylation of biotin on its carrier protein (BCCP) and then the CO(2) group is transferred by the carboxyltransferase to acetyl-CoA to form malonyl-CoA. The protein is Acetyl-coenzyme A carboxylase carboxyl transferase subunit alpha of Nitrobacter hamburgensis (strain DSM 10229 / NCIMB 13809 / X14).